The following is a 67-amino-acid chain: Small ribosomal subunit protein bS21 (67 aa).

It belongs to the bacterial ribosomal protein bS21 family.

The protein is Small ribosomal subunit protein bS21 of Desulfovibrio desulfuricans (strain ATCC 27774 / DSM 6949 / MB).